A 263-amino-acid polypeptide reads, in one-letter code: 4-hydroxy-2-oxo-heptane-1,7-dioate aldolase (263 aa).

H45 serves as the catalytic Proton acceptor. Position 147 (Q147) interacts with substrate. Position 149 (E149) interacts with a divalent metal cation. Residues A174 and D175 each contribute to the substrate site. D175 provides a ligand contact to a divalent metal cation.

It belongs to the HpcH/HpaI aldolase family. As to quaternary structure, homohexamer; trimer of dimers. The cofactor is a divalent metal cation.

It catalyses the reaction 4-hydroxy-2-oxoheptanedioate = succinate semialdehyde + pyruvate. Its pathway is aromatic compound metabolism; 4-hydroxyphenylacetate degradation; pyruvate and succinate semialdehyde from 4-hydroxyphenylacetate: step 7/7. In terms of biological role, catalyzes the reversible retro-aldol cleavage of 4-hydroxy-2-ketoheptane-1,7-dioate (HKHD) to pyruvate and succinic semialdehyde. The polypeptide is 4-hydroxy-2-oxo-heptane-1,7-dioate aldolase (Salmonella arizonae (strain ATCC BAA-731 / CDC346-86 / RSK2980)).